We begin with the raw amino-acid sequence, 284 residues long: Release factor glutamine methyltransferase (284 aa).

Residues 125-129, Glu-148, and Asn-190 contribute to the S-adenosyl-L-methionine site; that span reads GVGSG. Substrate is bound at residue 190–193; that stretch reads NPPY.

This sequence belongs to the protein N5-glutamine methyltransferase family. PrmC subfamily.

It carries out the reaction L-glutaminyl-[peptide chain release factor] + S-adenosyl-L-methionine = N(5)-methyl-L-glutaminyl-[peptide chain release factor] + S-adenosyl-L-homocysteine + H(+). In terms of biological role, methylates the class 1 translation termination release factors RF1/PrfA and RF2/PrfB on the glutamine residue of the universally conserved GGQ motif. The protein is Release factor glutamine methyltransferase of Geobacter sulfurreducens (strain ATCC 51573 / DSM 12127 / PCA).